We begin with the raw amino-acid sequence, 440 residues long: Platelet-activating factor acetylhydrolase (440 aa).

An N-terminal signal peptide occupies residues 1 to 21 (MVPLKLQALFCLLCCLPWVHP). N-linked (GlcNAc...) asparagine glycosylation is found at N59, N75, and N199. S272 serves as the catalytic Nucleophile. Catalysis depends on charge relay system residues D295 and H350.

It belongs to the AB hydrolase superfamily. Lipase family. In terms of processing, N-glycosylated. In terms of tissue distribution, plasma.

The protein localises to the secreted. Its subcellular location is the extracellular space. It catalyses the reaction a 1-O-alkyl-2-acetyl-sn-glycero-3-phosphocholine + H2O = a 1-O-alkyl-sn-glycero-3-phosphocholine + acetate + H(+). The catalysed reaction is 1-O-decyl-2-acetyl-sn-glycero-3-phosphocholine + H2O = 1-O-decyl-sn-glycero-3-phosphocholine + acetate + H(+). It carries out the reaction 1-O-dodecyl-2-acetyl-sn-glycero-3-phosphocholine + H2O = 1-O-dodecyl-sn-glycero-3-phosphocholine + acetate + H(+). The enzyme catalyses 1-O-tetradecyl-2-acetyl-sn-glycero-3-phosphocholine + H2O = 1-O-tetradecyl-sn-glycero-3-phosphocholine + acetate + H(+). It catalyses the reaction 1-O-hexadecyl-2-acetyl-sn-glycero-3-phosphocholine + H2O = 1-O-hexadecyl-sn-glycero-3-phosphocholine + acetate + H(+). The catalysed reaction is 1-O-octadecyl-2-acetyl-sn-glycero-3-phosphocholine + H2O = 1-O-octadecyl-sn-glycero-3-phosphocholine + acetate + H(+). It carries out the reaction 1-hexadecanoyl-2-acetyl-sn-glycero-3-phosphocholine + H2O = 1-hexadecanoyl-sn-glycero-3-phosphocholine + acetate + H(+). The enzyme catalyses 1-hexadecanoyl-2-propionyl-sn-glycero-3-phosphocholine + H2O = propanoate + 1-hexadecanoyl-sn-glycero-3-phosphocholine + H(+). It catalyses the reaction 1-hexadecanoyl-2-butanoyl-sn-glycero-3-phosphocholine + H2O = butanoate + 1-hexadecanoyl-sn-glycero-3-phosphocholine + H(+). The catalysed reaction is 1-hexadecanoyl-2-pentanoyl-sn-glycero-3-phosphocholine + H2O = pentanoate + 1-hexadecanoyl-sn-glycero-3-phosphocholine + H(+). It carries out the reaction 1-hexadecanoyl-2-glutaroyl-sn-glycero-3-phosphocholine + H2O = glutarate + 1-hexadecanoyl-sn-glycero-3-phosphocholine + H(+). The enzyme catalyses 1-hexadecanoyl-2-(5-oxopentanoyl)-sn-glycero-3-phosphocholine + H2O = 5-oxopentanoate + 1-hexadecanoyl-sn-glycero-3-phosphocholine + H(+). It catalyses the reaction 1-hexadecanoyl-2-(9-oxononanoyl)-sn-glycero-3-phosphocholine + H2O = 9-oxononanoate + 1-hexadecanoyl-sn-glycero-3-phosphocholine + H(+). The catalysed reaction is 1-hexadecanoyl-2-[9-hydroperoxy-(10E-octadecenoyl)]-sn-glycero-3-phosphocholine + H2O = 9-hydroperoxy-10E-octadecenoate + 1-hexadecanoyl-sn-glycero-3-phosphocholine + H(+). It carries out the reaction 1-hexadecanoyl-2-(10-hydroperoxy-8E-octadecenoyl)-sn-glycero-3-phosphocholine + H2O = 10-hydroperoxy-(8E)-octadecenoate + 1-hexadecanoyl-sn-glycero-3-phosphocholine + H(+). Its function is as follows. Lipoprotein-associated calcium-independent phospholipase A2 involved in phospholipid catabolism during inflammatory and oxidative stress response. At the lipid-aqueous interface, hydrolyzes the ester bond of fatty acyl group attached at sn-2 position of phospholipids (phospholipase A2 activity). Specifically targets phospholipids with a short-chain fatty acyl group at sn-2 position. Can hydrolyze phospholipids with long fatty acyl chains, only if they carry oxidized functional groups. Hydrolyzes and inactivates platelet-activating factor (PAF, 1-O-alkyl-2-acetyl-sn-glycero-3-phosphocholine), a potent pro-inflammatory signaling lipid that acts through PTAFR on various innate immune cells. Hydrolyzes oxidatively truncated phospholipids carrying an aldehyde group at omega position, preventing their accumulation in lipoprotein particles and uncontrolled pro-inflammatory effects. As part of high-density lipoprotein (HDL) particles, can hydrolyze phospholipids having long-chain fatty acyl hydroperoxides at sn-2 position and protect against potential accumulation of these oxylipins in the vascular wall. Catalyzes the release from membrane phospholipids of F2-isoprostanes, lipid biomarkers of cellular oxidative damage. The sequence is that of Platelet-activating factor acetylhydrolase (Pla2g7) from Mus musculus (Mouse).